The sequence spans 229 residues: uncharacterized protein (229 aa).

The protein to T.pallidum TP_0315, TP_0618 and TP_0619.

This is an uncharacterized protein from Treponema pallidum (strain Nichols).